The following is a 256-amino-acid chain: MAVGKNKRLSKGKKGLKKKVVDPFTRKDWFDIKAPTTFENRNVGKTLINRSTGLKNAADGLKGRVFEVCLADLQGSEDHSYRKIKLRVDEVQGKNLLTNFHGLDFTSDKLRSLVRKWQSLVEANVTVKTADDYVLRVFAIAFTKRQANQIKKTTYAQSSKLREVRKKMIEIMQREVSNCTLAQLTSKLIPEVIGREIEKSTQTIFPLQNVHIRKVKLLKQPKFDLGSLLALHGEGSTEEKGKKVSSGFKDVVLESV.

Position 2 is an N-acetylalanine; partial (Ala2).

The protein belongs to the eukaryotic ribosomal protein eS1 family. Component of the small ribosomal subunit. Mature ribosomes consist of a small (40S) and a large (60S) subunit. The 40S subunit contains about 33 different proteins and 1 molecule of RNA (18S). The 60S subunit contains about 49 different proteins and 3 molecules of RNA (25S, 5.8S and 5S).

Its subcellular location is the cytoplasm. The sequence is that of Small ribosomal subunit protein eS1 from Candida tropicalis (strain ATCC MYA-3404 / T1) (Yeast).